We begin with the raw amino-acid sequence, 274 residues long: Phosphate import ATP-binding protein PstB (274 aa).

In terms of domain architecture, ABC transporter spans 28–269 (VTVRDLNFYY…PNDRRTQDYI (242 aa)). 60–67 (GPSGCGKS) provides a ligand contact to ATP.

Belongs to the ABC transporter superfamily. Phosphate importer (TC 3.A.1.7) family. As to quaternary structure, the complex is composed of two ATP-binding proteins (PstB), two transmembrane proteins (PstC and PstA) and a solute-binding protein (PstS).

It is found in the cell inner membrane. It carries out the reaction phosphate(out) + ATP + H2O = ADP + 2 phosphate(in) + H(+). Functionally, part of the ABC transporter complex PstSACB involved in phosphate import. Responsible for energy coupling to the transport system. The chain is Phosphate import ATP-binding protein PstB from Rhodopseudomonas palustris (strain HaA2).